Reading from the N-terminus, the 247-residue chain is Germin-like protein 9-1 (247 aa).

An N-terminal signal peptide occupies residues Met-1–Ala-25. The Cupin type-1 domain maps to Lys-53–Asp-201. Residues His-100, His-102, and Glu-107 each coordinate Mn(2+). Asn-126 is a glycosylation site (N-linked (GlcNAc...) asparagine). His-148 lines the Mn(2+) pocket. Residue Asn-153 is glycosylated (N-linked (GlcNAc...) asparagine).

The protein belongs to the germin family. In terms of assembly, oligomer (believed to be a pentamer but probably hexamer).

Its subcellular location is the secreted. The protein localises to the extracellular space. The protein resides in the apoplast. Its function is as follows. May play a role in plant defense. Probably has no oxalate oxidase activity even if the active site is conserved. This Oryza sativa subsp. japonica (Rice) protein is Germin-like protein 9-1.